A 73-amino-acid chain; its full sequence is Antitoxin VapB20 (73 aa).

Antitoxin component of a type II toxin-antitoxin (TA) system. Upon expression in E.coli neutralizes the toxic effect of cognate toxin VapC20. The sequence is that of Antitoxin VapB20 (vapB20) from Mycobacterium tuberculosis (strain ATCC 25618 / H37Rv).